Reading from the N-terminus, the 554-residue chain is Phosphoglucomutase (554 aa).

Residue Arg21 coordinates alpha-D-glucose 1,6-bisphosphate. Position 111 is a phosphothreonine (Thr111). Ser113 is a binding site for alpha-D-glucose 1,6-bisphosphate. Ser113 serves as the catalytic Phosphoserine intermediate. 4 residues coordinate Mg(2+): Ser113, Asp278, Asp280, and Asp282. Ser113 carries the phosphoserine modification. Alpha-D-glucose 1,6-bisphosphate contacts are provided by Asp282, Arg283, Thr346, Glu365, Ser367, and Lys378.

Belongs to the phosphohexose mutase family. As to quaternary structure, monomer. Requires Mg(2+) as cofactor.

The protein localises to the cytoplasm. The protein resides in the nucleus. It catalyses the reaction alpha-D-glucose 1-phosphate = alpha-D-glucose 6-phosphate. The enzyme catalyses O-phospho-L-seryl-[protein] + alpha-D-glucose 1-phosphate = alpha-D-glucose 1,6-bisphosphate + L-seryl-[protein]. The catalysed reaction is alpha-D-glucose 1,6-bisphosphate + L-seryl-[protein] = O-phospho-L-seryl-[protein] + alpha-D-glucose 6-phosphate. Catalyzes the reversible isomerization of alpha-D-glucose 1-phosphate to alpha-D-glucose 6-phosphate. The mechanism proceeds via the intermediate compound alpha-D-glucose 1,6-bisphosphate. Key enzyme in hexose metabolism. The reverse reaction is an essential step for biosynthesis because glucose 1-phosphate is the starting point for the synthesis of UDP-glucose, which acts as a precursor for the synthesis of oligosaccharides and trehalose. The polypeptide is Phosphoglucomutase (Schizosaccharomyces pombe (strain 972 / ATCC 24843) (Fission yeast)).